Reading from the N-terminus, the 501-residue chain is Cytochrome P450 3A31 (501 aa).

Cysteine 440 lines the heme pocket.

The protein belongs to the cytochrome P450 family. Heme serves as cofactor. As to expression, expressed constitutively in liver.

Its subcellular location is the endoplasmic reticulum membrane. It localises to the microsome membrane. The enzyme catalyses an organic molecule + reduced [NADPH--hemoprotein reductase] + O2 = an alcohol + oxidized [NADPH--hemoprotein reductase] + H2O + H(+). In terms of biological role, cytochromes P450 are a group of heme-thiolate monooxygenases. In liver microsomes, this enzyme is involved in an NADPH-dependent electron transport pathway. It oxidizes a variety of structurally unrelated compounds, including steroids, fatty acids, and xenobiotics. The protein is Cytochrome P450 3A31 (CYP3A31) of Mesocricetus auratus (Golden hamster).